A 231-amino-acid chain; its full sequence is NADH-ubiquinone oxidoreductase chain 4 (231 aa).

A run of 6 helical transmembrane segments spans residues 1–21, 34–54, 63–85, 89–111, 128–148, and 169–189; these read PIAGSMVLAAILLKLGGYGII, MFLPFIVLALWGAILANLTCL, IAYSSISHMGLVVATIIIQTPWG, ALALMIAHGFTSSALFCLANTTY, ILPMATTWWLLANLMNIAIPP, and TIIMLGLSMLITASYSLHMFL.

It belongs to the complex I subunit 4 family.

It is found in the mitochondrion membrane. It catalyses the reaction a ubiquinone + NADH + 5 H(+)(in) = a ubiquinol + NAD(+) + 4 H(+)(out). Its function is as follows. Core subunit of the mitochondrial membrane respiratory chain NADH dehydrogenase (Complex I) that is believed to belong to the minimal assembly required for catalysis. Complex I functions in the transfer of electrons from NADH to the respiratory chain. The immediate electron acceptor for the enzyme is believed to be ubiquinone. The chain is NADH-ubiquinone oxidoreductase chain 4 (MT-ND4) from Bothrocophias hyoprora (Amazonian hognose viper).